We begin with the raw amino-acid sequence, 31 residues long: Cyclotide cter-R (31 aa).

The segment at residues 1-31 (GIPCGESCVFIPCTVTALLGCSCKDKVCYKN) is a cross-link (cyclopeptide (Gly-Asn)). 3 cysteine pairs are disulfide-bonded: cysteine 4/cysteine 21, cysteine 8/cysteine 23, and cysteine 13/cysteine 28.

This is a cyclic peptide.

It localises to the secreted. In terms of biological role, probably participates in a plant defense mechanism. The protein is Cyclotide cter-R of Clitoria ternatea (Butterfly pea).